Here is a 213-residue protein sequence, read N- to C-terminus: Octanoyltransferase (213 aa).

One can recognise a BPL/LPL catalytic domain in the interval 32 to 207; sequence DHTPDEIWLV…KLLALLNNPP (176 aa). Residues 71-78, 138-140, and 151-153 each bind substrate; these read RGGQVTYH, SLG, and GLA. The active-site Acyl-thioester intermediate is Cys169.

The protein belongs to the LipB family.

It localises to the cytoplasm. It catalyses the reaction octanoyl-[ACP] + L-lysyl-[protein] = N(6)-octanoyl-L-lysyl-[protein] + holo-[ACP] + H(+). It functions in the pathway protein modification; protein lipoylation via endogenous pathway; protein N(6)-(lipoyl)lysine from octanoyl-[acyl-carrier-protein]: step 1/2. Functionally, catalyzes the transfer of endogenously produced octanoic acid from octanoyl-acyl-carrier-protein onto the lipoyl domains of lipoate-dependent enzymes. Lipoyl-ACP can also act as a substrate although octanoyl-ACP is likely to be the physiological substrate. The polypeptide is Octanoyltransferase (Enterobacter sp. (strain 638)).